Here is a 36-residue protein sequence, read N- to C-terminus: Serine protease inhibitor 2 (36 aa).

In terms of domain architecture, Pacifastin spans 1–36 (EISCEPGTTFQDKCNTCRCGKDGKSAAGCTLKACPQ). Cystine bridges form between Cys4–Cys19, Cys14–Cys34, and Cys17–Cys29.

This sequence belongs to the protease inhibitor I19 family. In terms of tissue distribution, expressed in hemolymph.

The protein localises to the secreted. In terms of biological role, probable serine protease inhibitor. This Melanoplus sanguinipes (Migratory grasshopper) protein is Serine protease inhibitor 2.